We begin with the raw amino-acid sequence, 493 residues long: Involucrin (493 aa).

Disordered regions lie at residues 1–47, 60–123, and 139–493; these read MSQQ…CQKV, EEKH…GQLE, and KRDE…GQHE. Positions 76 to 89 are enriched in low complexity; that stretch reads EQQQPQEQELQQQH. Basic and acidic residues-rich tracts occupy residues 90 to 116, 139 to 151, 161 to 174, 184 to 193, and 201 to 213; these read WEQD…REKQ, KRDE…KEQL, QLKH…HLEL, NLEHQEKPLE, and QLKH…KPLE. Over residues 228–240 the composition is skewed to polar residues; sequence QEGQSELPEQQRG. Composition is skewed to basic and acidic residues over residues 250–270, 282–360, 372–386, 411–431, and 439–450; these read GQLK…HEEG, KHLE…HEGQ, KHLE…HPEQ, KHLE…EQLK, and QLKDLEQQERQL. Positions 473 to 493 are enriched in low complexity; sequence GEVLLPVEQQQQKQEVQGQHE.

It belongs to the involucrin family. Directly or indirectly cross-linked to cornifelin (CNFN). In terms of processing, substrate of transglutaminase. Specific glutamines or lysines are cross-linked to keratins, desmoplakin and to inter involucrin molecules. Keratinocytes of epidermis and other stratified squamous epithelia.

It is found in the cytoplasm. Part of the insoluble cornified cell envelope (CE) of stratified squamous epithelia. In Saguinus oedipus (Cotton-top tamarin), this protein is Involucrin (IVL).